Here is a 254-residue protein sequence, read N- to C-terminus: Vesicle transport protein USE1 (254 aa).

The Cytoplasmic segment spans residues 1–228 (MAYISENELK…AYKCGYDCFK (228 aa)). Residues 229–249 (VMLIVLIFMSFVSMVLMMKIF) form a helical; Anchor for type IV membrane protein membrane-spanning segment. Residues 250-254 (KKAST) are Lumenal-facing.

It belongs to the USE1 family.

The protein resides in the endoplasmic reticulum membrane. In terms of biological role, SNARE that may be involved in targeting and fusion of Golgi-derived retrograde transport vesicles with the ER. The polypeptide is Vesicle transport protein USE1 (Caenorhabditis elegans).